Consider the following 487-residue polypeptide: GTPase Der (487 aa).

2 consecutive EngA-type G domains span residues 5–169 (PKLA…SREI) and 178–351 (IKVA…ANSQ). Residues 11 to 18 (GRPNVGKS), 58 to 62 (DTGGI), 121 to 124 (NKID), 184 to 191 (GRANVGKS), 231 to 235 (DTAGI), and 296 to 299 (NKWD) each bind GTP. Positions 352–439 (KRITTHQLNK…IHLKGKTKKD (88 aa)) constitute a KH-like domain. Residues 441–466 (PVSSLSLTRKQTKSTDQENNEYDELY) form a disordered region.

The protein belongs to the TRAFAC class TrmE-Era-EngA-EngB-Septin-like GTPase superfamily. EngA (Der) GTPase family. In terms of assembly, associates with the 50S ribosomal subunit.

In terms of biological role, GTPase that plays an essential role in the late steps of ribosome biogenesis. This chain is GTPase Der, found in Protochlamydia amoebophila (strain UWE25).